The chain runs to 322 residues: Protein-L-isoaspartate O-methyltransferase (322 aa).

The segment at 1 to 101 (MSGERAKRFP…AKQGDRSAAP (101 aa)) is disordered. A compositionally biased stretch (basic and acidic residues) spans 14–29 (EDLKREPRKPEGRVAE). 2 stretches are compositionally biased toward low complexity: residues 33 to 51 (AGDAARQRLTAAAAAPAAA) and 76 to 91 (HAPAAPGAAKRAPQGG). The active site involves serine 170.

Belongs to the methyltransferase superfamily. L-isoaspartyl/D-aspartyl protein methyltransferase family.

It is found in the cytoplasm. It carries out the reaction [protein]-L-isoaspartate + S-adenosyl-L-methionine = [protein]-L-isoaspartate alpha-methyl ester + S-adenosyl-L-homocysteine. Functionally, catalyzes the methyl esterification of L-isoaspartyl residues in peptides and proteins that result from spontaneous decomposition of normal L-aspartyl and L-asparaginyl residues. It plays a role in the repair and/or degradation of damaged proteins. The protein is Protein-L-isoaspartate O-methyltransferase of Burkholderia pseudomallei (strain 1710b).